The following is a 111-amino-acid chain: Cytochrome c-550 (111 aa).

The heme c site is built by C13, C16, H17, and M90.

Binds 1 heme c group covalently per subunit.

The chain is Cytochrome c-550 from Novispirillum itersonii (Aquaspirillum itersonii).